The chain runs to 528 residues: GMP synthase [glutamine-hydrolyzing] (528 aa).

The Glutamine amidotransferase type-1 domain occupies 13 to 204; that stretch reads SILILDFGSQ…VYKISCCTAD (192 aa). The active-site Nucleophile is Cys-90. Residues His-178 and Glu-180 contribute to the active site. One can recognise a GMPS ATP-PPase domain in the interval 205 to 403; that stretch reads WTTETYIEET…LGLPDEIIKR (199 aa). ATP is bound at residue 232-238; that stretch reads SGGVDSS.

As to quaternary structure, homodimer.

It carries out the reaction XMP + L-glutamine + ATP + H2O = GMP + L-glutamate + AMP + diphosphate + 2 H(+). It functions in the pathway purine metabolism; GMP biosynthesis; GMP from XMP (L-Gln route): step 1/1. Functionally, catalyzes the synthesis of GMP from XMP. This Prochlorococcus marinus (strain AS9601) protein is GMP synthase [glutamine-hydrolyzing].